The sequence spans 265 residues: Hydroxyethylthiazole kinase (265 aa).

Met41 is a binding site for substrate. Positions 117 and 163 each coordinate ATP. Residue Gly190 coordinates substrate.

It belongs to the Thz kinase family. Mg(2+) serves as cofactor.

The catalysed reaction is 5-(2-hydroxyethyl)-4-methylthiazole + ATP = 4-methyl-5-(2-phosphooxyethyl)-thiazole + ADP + H(+). The protein operates within cofactor biosynthesis; thiamine diphosphate biosynthesis; 4-methyl-5-(2-phosphoethyl)-thiazole from 5-(2-hydroxyethyl)-4-methylthiazole: step 1/1. Functionally, catalyzes the phosphorylation of the hydroxyl group of 4-methyl-5-beta-hydroxyethylthiazole (THZ). This chain is Hydroxyethylthiazole kinase, found in Pediococcus pentosaceus (strain ATCC 25745 / CCUG 21536 / LMG 10740 / 183-1w).